The primary structure comprises 580 residues: E3 ubiquitin-protein ligase TRIM45 (580 aa).

Residues 29–98 (CPLCLGLFKA…QIGILCPVCD (70 aa)) form an RING-type zinc finger. B box-type zinc fingers lie at residues 130–176 (GQGL…MVDL) and 186–227 (GKPI…CDFT). Zn(2+) contacts are provided by cysteine 135, cysteine 138, cysteine 158, histidine 162, cysteine 191, histidine 194, cysteine 214, and histidine 219. The stretch at 281 to 335 (SEGYIKAIEEHRDKLLKQLEDIRAQKENSLQLQKAQLEQLLADMRTGVEFTEHLL) forms a coiled coil. A Filamin repeat occupies 394–497 (TKEVDPAKCV…VQGSPFTVMV (104 aa)).

It belongs to the TRIM/RBCC family. As to expression, expressed in skeletal muscle, brain, heart and pancreas.

It is found in the cytoplasm. The protein localises to the nucleus. It carries out the reaction S-ubiquitinyl-[E2 ubiquitin-conjugating enzyme]-L-cysteine + [acceptor protein]-L-lysine = [E2 ubiquitin-conjugating enzyme]-L-cysteine + N(6)-ubiquitinyl-[acceptor protein]-L-lysine.. Functionally, E3 ubiquitin-protein ligase that plays a role in the regulation of inflammatory response. Mechanistically, mediates the 'Lys-48'-linked polyubiquitination of TAB2, a regulatory protein of the kinase TAK1, leading to its degradation via the proteasomal pathway and inhibition of the TLR-mediated inflammatory immune response. May act as a transcriptional repressor in mitogen-activated protein kinase signaling pathway. The polypeptide is E3 ubiquitin-protein ligase TRIM45 (TRIM45) (Homo sapiens (Human)).